The chain runs to 236 residues: Probable chemoreceptor glutamine deamidase CheD (236 aa).

The interval 1 to 20 (MIEFGKRATPQSAADAVRGD) is disordered.

The protein belongs to the CheD family.

It carries out the reaction L-glutaminyl-[protein] + H2O = L-glutamyl-[protein] + NH4(+). Probably deamidates glutamine residues to glutamate on methyl-accepting chemotaxis receptors (MCPs), playing an important role in chemotaxis. This Ralstonia pickettii (strain 12J) protein is Probable chemoreceptor glutamine deamidase CheD.